Reading from the N-terminus, the 417-residue chain is NADH-quinone oxidoreductase subunit D (417 aa).

It belongs to the complex I 49 kDa subunit family. NDH-1 is composed of 14 different subunits. Subunits NuoB, C, D, E, F, and G constitute the peripheral sector of the complex.

The protein localises to the cell inner membrane. The catalysed reaction is a quinone + NADH + 5 H(+)(in) = a quinol + NAD(+) + 4 H(+)(out). Its function is as follows. NDH-1 shuttles electrons from NADH, via FMN and iron-sulfur (Fe-S) centers, to quinones in the respiratory chain. The immediate electron acceptor for the enzyme in this species is believed to be ubiquinone. Couples the redox reaction to proton translocation (for every two electrons transferred, four hydrogen ions are translocated across the cytoplasmic membrane), and thus conserves the redox energy in a proton gradient. This is NADH-quinone oxidoreductase subunit D from Polaromonas naphthalenivorans (strain CJ2).